The sequence spans 268 residues: Undecaprenyl-diphosphatase (268 aa).

Transmembrane regions (helical) follow at residues 8-28, 41-61, 83-103, 108-128, 144-164, 184-204, 218-238, and 246-266; these read VILG…TGHL, AFWD…IVGL, FVIG…VAGK, VLFN…ILLW, FPLL…IPGV, AAEF…AYDF, IVAI…KTFL, and FVVF…ALAL.

This sequence belongs to the UppP family.

It is found in the cell inner membrane. The catalysed reaction is di-trans,octa-cis-undecaprenyl diphosphate + H2O = di-trans,octa-cis-undecaprenyl phosphate + phosphate + H(+). In terms of biological role, catalyzes the dephosphorylation of undecaprenyl diphosphate (UPP). Confers resistance to bacitracin. The polypeptide is Undecaprenyl-diphosphatase (Bradyrhizobium diazoefficiens (strain JCM 10833 / BCRC 13528 / IAM 13628 / NBRC 14792 / USDA 110)).